Reading from the N-terminus, the 288-residue chain is Polyamine aminopropyltransferase (288 aa).

The region spanning 9-238 (ETLHDQFGQY…GIMTFAWATD (230 aa)) is the PABS domain. Gln33 is a binding site for S-methyl-5'-thioadenosine. His64 and Asp88 together coordinate spermidine. Residues Glu108 and 140–141 (DG) each bind S-methyl-5'-thioadenosine. Asp158 acts as the Proton acceptor in catalysis. 158-161 (DCTD) contributes to the spermidine binding site. An S-methyl-5'-thioadenosine-binding site is contributed by Pro165.

This sequence belongs to the spermidine/spermine synthase family. As to quaternary structure, homodimer or homotetramer.

The protein resides in the cytoplasm. It carries out the reaction S-adenosyl 3-(methylsulfanyl)propylamine + putrescine = S-methyl-5'-thioadenosine + spermidine + H(+). It functions in the pathway amine and polyamine biosynthesis; spermidine biosynthesis; spermidine from putrescine: step 1/1. Functionally, catalyzes the irreversible transfer of a propylamine group from the amino donor S-adenosylmethioninamine (decarboxy-AdoMet) to putrescine (1,4-diaminobutane) to yield spermidine. The sequence is that of Polyamine aminopropyltransferase from Escherichia coli (strain ATCC 8739 / DSM 1576 / NBRC 3972 / NCIMB 8545 / WDCM 00012 / Crooks).